The primary structure comprises 872 residues: Rho guanine nucleotide exchange factor scd1 (872 aa).

Positions 1 to 29 are disordered; it reads MAYFQDRKTSSRSLPSYINHSTQNLVGPR. Residues 11-25 show a composition bias toward polar residues; that stretch reads SRSLPSYINHSTQNL. One can recognise a Calponin-homology (CH) domain in the interval 82–198; that stretch reads DSIHREALNS…TIELLLKKYE (117 aa). The DH domain occupies 228-402; the sequence is SGRRVTAELY…VRVANQVNET (175 aa). Residues 426–547 form the PH domain; that stretch reads SLQYFGQLLV…WMSVLNRLLW (122 aa). 2 disordered regions span residues 553–667 and 743–765; these read SPKD…STAS and MKSDGSLLPSTKHTSLSSSSTST. Residues 560–584 are compositionally biased toward polar residues; the sequence is AASTPANPVYNRSSSQTSKGYNSSD. Serine 583 is subject to Phosphoserine. The span at 599 to 616 shows a compositional bias: low complexity; it reads SPTSISSPSSKSSPFTKT. Residues 617–633 are compositionally biased toward basic and acidic residues; the sequence is TSKDTKSATTTDERPSD. Low complexity-rich tracts occupy residues 645 to 667 and 748 to 765; these read TSSLRTSQTTSTIVSNDSSSTAS and SLLPSTKHTSLSSSSTST. The region spanning 772 to 859 is the PB1 domain; the sequence is TTNVKIRLRL…FELMDPVHNK (88 aa).

Scd1, scd2, cdc42, and ras1, in its GTP-bound state, act cooperatively to form a protein complex. Interacts with moe1 and cdc42.

It localises to the nucleus. The protein localises to the cytoplasm. Functionally, required for mating and morphogenesis. May contain a cryptic binding site for cdc42 that is enhanced by binding Ras. Interacts directly with scd2. Promotes the exchange of cdc42-bound GDP by GTP. Involved in septation and stimulates the elongation of conjugation tubes. This is Rho guanine nucleotide exchange factor scd1 (scd1) from Schizosaccharomyces pombe (strain 972 / ATCC 24843) (Fission yeast).